The following is a 1201-amino-acid chain: DNA-directed RNA polymerase subunit beta' (1201 aa).

Zn(2+) contacts are provided by Cys-60, Cys-62, Cys-75, and Cys-78. Residues Asp-449, Asp-451, and Asp-453 each coordinate Mg(2+). Residues Cys-818, Cys-892, Cys-899, and Cys-902 each coordinate Zn(2+).

This sequence belongs to the RNA polymerase beta' chain family. As to quaternary structure, the RNAP catalytic core consists of 2 alpha, 1 beta, 1 beta' and 1 omega subunit. When a sigma factor is associated with the core the holoenzyme is formed, which can initiate transcription. It depends on Mg(2+) as a cofactor. Requires Zn(2+) as cofactor.

The catalysed reaction is RNA(n) + a ribonucleoside 5'-triphosphate = RNA(n+1) + diphosphate. DNA-dependent RNA polymerase catalyzes the transcription of DNA into RNA using the four ribonucleoside triphosphates as substrates. This is DNA-directed RNA polymerase subunit beta' from Listeria welshimeri serovar 6b (strain ATCC 35897 / DSM 20650 / CCUG 15529 / CIP 8149 / NCTC 11857 / SLCC 5334 / V8).